Here is a 149-residue protein sequence, read N- to C-terminus: Transcriptional repressor NrdR (149 aa).

Residues 3–34 (CPFCSATDTKVIDSRLVAEGHQVRRRRECTEC) fold into a zinc finger. The 91-residue stretch at 49-139 (PRVIKRDGTR…VYRAFEDVSE (91 aa)) folds into the ATP-cone domain.

The protein belongs to the NrdR family. Zn(2+) serves as cofactor.

Negatively regulates transcription of bacterial ribonucleotide reductase nrd genes and operons by binding to NrdR-boxes. This is Transcriptional repressor NrdR from Shewanella sp. (strain MR-4).